The chain runs to 188 residues: Elongation factor P (188 aa).

Belongs to the elongation factor P family.

The protein localises to the cytoplasm. It functions in the pathway protein biosynthesis; polypeptide chain elongation. In terms of biological role, involved in peptide bond synthesis. Stimulates efficient translation and peptide-bond synthesis on native or reconstituted 70S ribosomes in vitro. Probably functions indirectly by altering the affinity of the ribosome for aminoacyl-tRNA, thus increasing their reactivity as acceptors for peptidyl transferase. The chain is Elongation factor P from Wolbachia pipientis wMel.